A 282-amino-acid polypeptide reads, in one-letter code: 2-dehydro-3-deoxyphosphooctonate aldolase (282 aa).

Belongs to the KdsA family.

Its subcellular location is the cytoplasm. It catalyses the reaction D-arabinose 5-phosphate + phosphoenolpyruvate + H2O = 3-deoxy-alpha-D-manno-2-octulosonate-8-phosphate + phosphate. Its pathway is carbohydrate biosynthesis; 3-deoxy-D-manno-octulosonate biosynthesis; 3-deoxy-D-manno-octulosonate from D-ribulose 5-phosphate: step 2/3. The protein operates within bacterial outer membrane biogenesis; lipopolysaccharide biosynthesis. This Granulibacter bethesdensis (strain ATCC BAA-1260 / CGDNIH1) protein is 2-dehydro-3-deoxyphosphooctonate aldolase.